The following is a 282-amino-acid chain: Putative phosphite transport system permease protein HtxC (282 aa).

4 consecutive transmembrane segments (helical) span residues 23–43, 81–101, 130–150, and 239–259; these read HFATSVVVLSLLAVAWYVCQI, LAMATIGTIFATIIAFPLALM, VYALVFVAAVGFGPFSGVLAI, and FNKMITVLAVVLLMVSAIDFI. The region spanning 77–260 is the ABC transmembrane type-1 domain; that stretch reads AGETLAMATI…LMVSAIDFIS (184 aa).

This sequence belongs to the binding-protein-dependent transport system permease family.

It is found in the cell inner membrane. Functionally, probably forms part of a binding-protein-dependent hypophosphite transporter. The protein is Putative phosphite transport system permease protein HtxC (htxC) of Stutzerimonas stutzeri (Pseudomonas stutzeri).